Reading from the N-terminus, the 705-residue chain is tRNA 5-methylaminomethyl-2-thiouridine biosynthesis bifunctional protein MnmC (705 aa).

Positions 1-241 are tRNA (mnm(5)s(2)U34)-methyltransferase; that stretch reads MTIKTADIQF…KREMLAGIIA (241 aa). The interval 289 to 705 is FAD-dependent cmnm(5)s(2)U34 oxidoreductase; sequence IGAGIAGASM…LIRQLIRREV (417 aa).

The protein in the N-terminal section; belongs to the methyltransferase superfamily. tRNA (mnm(5)s(2)U34)-methyltransferase family. This sequence in the C-terminal section; belongs to the DAO family. FAD is required as a cofactor.

Its subcellular location is the cytoplasm. It carries out the reaction 5-aminomethyl-2-thiouridine(34) in tRNA + S-adenosyl-L-methionine = 5-methylaminomethyl-2-thiouridine(34) in tRNA + S-adenosyl-L-homocysteine + H(+). Catalyzes the last two steps in the biosynthesis of 5-methylaminomethyl-2-thiouridine (mnm(5)s(2)U) at the wobble position (U34) in tRNA. Catalyzes the FAD-dependent demodification of cmnm(5)s(2)U34 to nm(5)s(2)U34, followed by the transfer of a methyl group from S-adenosyl-L-methionine to nm(5)s(2)U34, to form mnm(5)s(2)U34. This is tRNA 5-methylaminomethyl-2-thiouridine biosynthesis bifunctional protein MnmC from Pseudoalteromonas atlantica (strain T6c / ATCC BAA-1087).